The primary structure comprises 642 residues: Ribosome biogenesis protein BOP1 homolog (642 aa).

Residues 1 to 28 (MIHKRMNSTELERTSKKIDDYDSSDEED) form a disordered region. Over residues 10 to 20 (ELERTSKKIDD) the composition is skewed to basic and acidic residues. WD repeat units lie at residues 311–351 (GHSG…CLKT), 353–393 (SLDG…DRHR), 472–510 (RLKG…LKKK), 513–552 (TGSQ…KPWK), 556–595 (HHTA…DSLK), and 612–642 (KNGL…ALFT).

The protein belongs to the WD repeat BOP1/ERB1 family.

The protein resides in the nucleus. Its subcellular location is the nucleolus. It localises to the nucleoplasm. Required for maturation of ribosomal RNAs and formation of the large ribosomal subunit. The protein is Ribosome biogenesis protein BOP1 homolog of Brugia malayi (Filarial nematode worm).